We begin with the raw amino-acid sequence, 1039 residues long: L-arabinokinase (1039 aa).

The helical transmembrane segment at 662-678 threads the bilayer; sequence AAYVAGTILVLMIELGV. Position 693–703 (693–703) interacts with ATP; it reads PEGKGVSSSAA. Asp745 functions as the Proton acceptor in the catalytic mechanism.

The protein belongs to the GHMP kinase family.

The protein localises to the membrane. It catalyses the reaction L-arabinose + ATP = beta-L-arabinose 1-phosphate + ADP + H(+). Functionally, arabinose kinase. Involved in the salvage pathway which converts free L-arabinose to UDP-L-arabinose. May play a role in arabinose transport. The protein is L-arabinokinase (ARA1) of Arabidopsis thaliana (Mouse-ear cress).